The sequence spans 434 residues: UDP-N-acetylmuramoylalanine--D-glutamate ligase (434 aa).

113–119 (GSNGKST) contributes to the ATP binding site.

Belongs to the MurCDEF family.

The protein resides in the cytoplasm. The catalysed reaction is UDP-N-acetyl-alpha-D-muramoyl-L-alanine + D-glutamate + ATP = UDP-N-acetyl-alpha-D-muramoyl-L-alanyl-D-glutamate + ADP + phosphate + H(+). Its pathway is cell wall biogenesis; peptidoglycan biosynthesis. Cell wall formation. Catalyzes the addition of glutamate to the nucleotide precursor UDP-N-acetylmuramoyl-L-alanine (UMA). This Pasteurella multocida (strain Pm70) protein is UDP-N-acetylmuramoylalanine--D-glutamate ligase.